Consider the following 596-residue polypeptide: Elongation factor 4 (596 aa).

A tr-type G domain is found at Lys2–Glu184. GTP is bound by residues Asp14–Thr19 and Asn131–Asp134.

This sequence belongs to the TRAFAC class translation factor GTPase superfamily. Classic translation factor GTPase family. LepA subfamily.

The protein resides in the cell inner membrane. The enzyme catalyses GTP + H2O = GDP + phosphate + H(+). Functionally, required for accurate and efficient protein synthesis under certain stress conditions. May act as a fidelity factor of the translation reaction, by catalyzing a one-codon backward translocation of tRNAs on improperly translocated ribosomes. Back-translocation proceeds from a post-translocation (POST) complex to a pre-translocation (PRE) complex, thus giving elongation factor G a second chance to translocate the tRNAs correctly. Binds to ribosomes in a GTP-dependent manner. This is Elongation factor 4 from Shewanella halifaxensis (strain HAW-EB4).